Consider the following 250-residue polypeptide: Menaquinol:cytochrome c reductase cytochrome c subunit (250 aa).

A run of 3 helical transmembrane segments spans residues 46 to 62, 104 to 124, and 137 to 157; these read WLVG…LTVA, VIGA…APFL, and VATG…WESV. Residues 178-250 form the Cytochrome c domain; the sequence is DTNAEGYKIA…LQKMANSSPA (73 aa). Residues Cys192, Cys195, and His196 each coordinate heme c. Residues 229 to 250 form a disordered region; sequence MPGGIFKGTDEELQKMANSSPA.

The protein belongs to the cytochrome b family. In terms of assembly, the main subunits of the menaquinol:cytochrome c complex are a Rieske-type iron-sulfur protein (QcrA), a cytochrome b (QcrB) and a cytochrome c (QcrC). Heme c is required as a cofactor.

The protein resides in the cell membrane. In terms of biological role, component of the menaquinol:cytochrome c reductase complex. The sequence is that of Menaquinol:cytochrome c reductase cytochrome c subunit (qcrC) from Geobacillus thermodenitrificans.